The following is a 775-amino-acid chain: Metal transporter CNNM4 (775 aa).

The Extracellular portion of the chain corresponds to 1–178 (MAPVGGGGRP…LLFMVEEPGR (178 aa)). N-linked (GlcNAc...) asparagine glycosylation is found at asparagine 85 and asparagine 122. The region spanning 178–358 (RFLPLWLHIL…EPYNDLVKEE (181 aa)) is the CNNM transmembrane domain. A helical transmembrane segment spans residues 179–199 (FLPLWLHILLITVLLVLSGIF). The Cytoplasmic portion of the chain corresponds to 200–240 (SGLNLGLMALDPMELRIVQNCGTEKERRYARKIEPIRRKGN). Positions 241-261 (YLLCSLLLGNVLVNTSLTILL) form an intramembrane region, helical. Residues 262-264 (DNL) lie on the Cytoplasmic side of the membrane. The chain crosses the membrane as a helical span at residues 265 to 285 (IGSGLMAVASSTIGIVIFGEI). The Extracellular segment spans residues 286 to 293 (LPQALCSR). A helical membrane pass occupies residues 294–316 (HGLAVGANTILLTKFFMLLTFPL). Residues 317–775 (SFPISKLLDF…LHKASHENAI (459 aa)) lie on the Cytoplasmic side of the membrane. CBS domains lie at 377–438 (MTQL…CTPL) and 445–511 (YNHP…ILDE). 3 positions are modified to phosphoserine: serine 660, serine 664, and serine 770.

This sequence belongs to the ACDP family. In terms of assembly, interacts with COX11. As to expression, widely expressed. Highly expressed in heart.

The protein localises to the cell membrane. In terms of biological role, probable metal transporter. The interaction with the metal ion chaperone COX11 suggests that it may play a role in sensory neuron functions. May play a role in biomineralization and retinal function. The polypeptide is Metal transporter CNNM4 (CNNM4) (Homo sapiens (Human)).